The sequence spans 220 residues: Ribosomal RNA small subunit methyltransferase Nep1 (220 aa).

S-adenosyl-L-methionine-binding positions include G178, G183, and 196 to 201 (IYKEPL).

The protein belongs to the class IV-like SAM-binding methyltransferase superfamily. RNA methyltransferase NEP1 family. In terms of assembly, homodimer.

It carries out the reaction a pseudouridine in rRNA + S-adenosyl-L-methionine = an N(1)-methylpseudouridine in rRNA + S-adenosyl-L-homocysteine + H(+). Functionally, methyltransferase involved in ribosomal biogenesis. Specifically catalyzes the N1-methylation of the pseudouridine corresponding to position 914 in M.jannaschii 16S rRNA. The polypeptide is Ribosomal RNA small subunit methyltransferase Nep1 (Thermococcus sibiricus (strain DSM 12597 / MM 739)).